A 272-amino-acid chain; its full sequence is MGIKTFAPRSHGRRGMTGFDFKEITKTTPEKSLLAPLKKQAARNNHGQITIRHQGGGHKRKYRLVDFKRNKLEVAAKVIAIEYDPNRTCRIALISYIDGAKAYILAPVGLNVGDTVISSDKADIKPGNSLTLGAIPVGTVIHNIELRPGKGGQICRGAGASATLAGKGDKYCQVRMPSGELKQVLTVCRASIGQVGNTDNENINLGKAGRSRWRGIRPSVRGMHMNPVDHPLGGGEGVGKGHHPVTPWGQPCKGFKTRNNKRTNSSIIKRRK.

The tract at residues 247-272 (PWGQPCKGFKTRNNKRTNSSIIKRRK) is disordered. The span at 262 to 272 (RTNSSIIKRRK) shows a compositional bias: polar residues.

It belongs to the universal ribosomal protein uL2 family. As to quaternary structure, part of the 50S ribosomal subunit. Forms a bridge to the 30S subunit in the 70S ribosome.

Its function is as follows. One of the primary rRNA binding proteins. Required for association of the 30S and 50S subunits to form the 70S ribosome, for tRNA binding and peptide bond formation. It has been suggested to have peptidyltransferase activity; this is somewhat controversial. Makes several contacts with the 16S rRNA in the 70S ribosome. The sequence is that of Large ribosomal subunit protein uL2 from Bdellovibrio bacteriovorus (strain ATCC 15356 / DSM 50701 / NCIMB 9529 / HD100).